The following is a 163-amino-acid chain: ATP synthase subunit b 1 (163 aa).

Residues 7 to 27 (AETWVAIAFVILLGVFAYLGV) traverse the membrane as a helical segment.

It belongs to the ATPase B chain family. In terms of assembly, F-type ATPases have 2 components, F(1) - the catalytic core - and F(0) - the membrane proton channel. F(1) has five subunits: alpha(3), beta(3), gamma(1), delta(1), epsilon(1). F(0) has three main subunits: a(1), b(2) and c(10-14). The alpha and beta chains form an alternating ring which encloses part of the gamma chain. F(1) is attached to F(0) by a central stalk formed by the gamma and epsilon chains, while a peripheral stalk is formed by the delta and b chains.

The protein resides in the cell inner membrane. Functionally, f(1)F(0) ATP synthase produces ATP from ADP in the presence of a proton or sodium gradient. F-type ATPases consist of two structural domains, F(1) containing the extramembraneous catalytic core and F(0) containing the membrane proton channel, linked together by a central stalk and a peripheral stalk. During catalysis, ATP synthesis in the catalytic domain of F(1) is coupled via a rotary mechanism of the central stalk subunits to proton translocation. Its function is as follows. Component of the F(0) channel, it forms part of the peripheral stalk, linking F(1) to F(0). The polypeptide is ATP synthase subunit b 1 (Rhodopseudomonas palustris (strain ATCC BAA-98 / CGA009)).